The chain runs to 130 residues: Holo-[acyl-carrier-protein] synthase (130 aa).

The Mg(2+) site is built by D8 and E62.

This sequence belongs to the P-Pant transferase superfamily. AcpS family. The cofactor is Mg(2+).

The protein resides in the cytoplasm. The enzyme catalyses apo-[ACP] + CoA = holo-[ACP] + adenosine 3',5'-bisphosphate + H(+). In terms of biological role, transfers the 4'-phosphopantetheine moiety from coenzyme A to a Ser of acyl-carrier-protein. The sequence is that of Holo-[acyl-carrier-protein] synthase from Acidovorax ebreus (strain TPSY) (Diaphorobacter sp. (strain TPSY)).